The chain runs to 1024 residues: PH and SEC7 domain-containing protein 1 (1024 aa).

Positions 67–96 are disordered; that stretch reads CTPLRAPPSPHIAPSPWGPSSPTGQPPPGA. Positions 71–95 are enriched in pro residues; it reads RAPPSPHIAPSPWGPSSPTGQPPPG. Residues Ser126 and Ser156 each carry the phosphoserine modification. 4 disordered regions span residues 154 to 195, 250 to 277, 307 to 401, and 434 to 536; these read STSD…LPNG, PSSG…VAVG, REEA…GPDS, and PTQS…LDST. A compositionally biased stretch (acidic residues) spans 348-365; it reads NEDDEAGGEEDVDDEVFE. Residues 445–463 show a composition bias toward pro residues; that stretch reads PPQPPAPRPDPPAPAPLAP. Residues 495–507 show a composition bias toward basic and acidic residues; it reads PRKELPSPSHSED. The SEC7 domain maps to 512 to 706; the sequence is GAAPLGSEPP…KALYSSIKNE (195 aa). A Phosphoserine modification is found at Ser720. The PH domain maps to 756-869; that stretch reads AVYKHGALVR…WITRINVVAA (114 aa). Coiled-coil stretches lie at residues 898 to 924 and 956 to 983; these read LSQE…HRAA and AALL…AGST. A disordered region spans residues 976–1024; it reads ALAQAGSTEDGCPPPHSSPSLRPKPTSQPRAQRPGSETRAGAGSTRPKP.

This sequence belongs to the PSD family. As to quaternary structure, interacts with ACTN1. Interacts (ARF6-bound form) with KCNK1; does not interact with KCNK1 in the absence of ARF6. As to expression, highest expression detected in brain and some expression detected also in uterus, stomach, ovary and intestine, with isoform 2 being expressed at the highest levels. In the brain, isoform 1 is highly expressed in the strata oriens, radiatum, lacunosum-moleculare of the hippocampal CA1-3 regions and the dentate molecular layer of the hippocampal formation, with lower levels detected in the neuronal cell layers and the stratum lucidum (at protein level). Not detected in tongue, thymus, spleen, lung, heart, liver and kidney.

Its subcellular location is the cell membrane. It is found in the cell projection. The protein resides in the ruffle. It localises to the ruffle membrane. The protein localises to the cleavage furrow. Functionally, guanine nucleotide exchange factor for ARF6. Isoform 2 and isoform 3 induce cytoskeletal remodeling, but lead to distinct morphological changes in HeLa cells: isoform 2 induces cell elongation and formation of actin-rich protrusions, whereas isoform 3 promotes the formation of membrane ruffles and loss of stress fibers. The chain is PH and SEC7 domain-containing protein 1 (Psd) from Mus musculus (Mouse).